Consider the following 531-residue polypeptide: UDP-glucuronosyltransferase 1A3 (531 aa).

Positions 1 to 25 (MGIQGFLQKLSGLLLLLCALPWAEG) are cleaved as a signal peptide. Residues N116, N139, N293, and N431 are each glycosylated (N-linked (GlcNAc...) asparagine). The helical transmembrane segment at 489–505 (VIGFLLAIVLTVVFIVY) threads the bilayer.

It belongs to the UDP-glycosyltransferase family. As to quaternary structure, homodimers. Homooligomer. Interacts with UGT1A1, UGT1A4, UGT1A6, UGT1A7, UGT1A8, UGT1A9 and UGT1A10 to form heterodimers.

Its subcellular location is the endoplasmic reticulum membrane. The enzyme catalyses glucuronate acceptor + UDP-alpha-D-glucuronate = acceptor beta-D-glucuronoside + UDP + H(+). The catalysed reaction is 17beta-estradiol + UDP-alpha-D-glucuronate = 17beta-estradiol 3-O-(beta-D-glucuronate) + UDP + H(+). It carries out the reaction 17beta-estradiol + UDP-alpha-D-glucuronate = 17beta-estradiol 17-O-(beta-D-glucuronate) + UDP + H(+). It catalyses the reaction 17alpha-estradiol + UDP-alpha-D-glucuronate = 17alpha-estradiol 3-O-(beta-D-glucuronate) + UDP + H(+). The enzyme catalyses estrone + UDP-alpha-D-glucuronate = estrone 3-O-(beta-D-glucuronate) + UDP + H(+). The catalysed reaction is chenodeoxycholate + UDP-alpha-D-glucuronate = chenodeoxycholoyl-24-O-(beta-D-glucuronate) + UDP. It carries out the reaction deoxycholate + UDP-alpha-D-glucuronate = deoxycholoyl-24-O-(beta-D-glucuronate) + UDP. It catalyses the reaction lithocholate + UDP-alpha-D-glucuronate = lithocholoyl-24-O-(beta-D-glucuronate) + UDP. The enzyme catalyses hyodeoxycholate + UDP-alpha-D-glucuronate = hyodeoxycholoyl-24-O-(beta-D-glucuronate) + UDP. The catalysed reaction is hyocholate + UDP-alpha-D-glucuronate = hyocholoyl-24-O-(beta-D-glucuronate) + UDP. It carries out the reaction calcidiol + UDP-alpha-D-glucuronate = calcidiol 25-O-(beta-D-glucuronide) + UDP + H(+). It catalyses the reaction losartan + UDP-alpha-D-glucuronate = losartan-2-N-beta-D-glucuronide + UDP. The enzyme catalyses candesartan + UDP-alpha-D-glucuronate = candesartan-2-N-beta-D-glucuronide + UDP. The catalysed reaction is zolasartan + UDP-alpha-D-glucuronate = zolarsartan-2-N-beta-D-glucuronide + UDP. It carries out the reaction (E)-ferulate + UDP-alpha-D-glucuronate = (E)-4-O-(beta-D-glucuronosyl)-ferulate + UDP + H(+). It catalyses the reaction (E)-ferulate + UDP-alpha-D-glucuronate = (E)-ferulic acid beta-D-glucuronate ester + UDP. Functionally, UDP-glucuronosyltransferase (UGT) that catalyzes phase II biotransformation reactions in which lipophilic substrates are conjugated with glucuronic acid to increase the metabolite's water solubility, thereby facilitating excretion into either the urine or bile. Essential for the elimination and detoxification of drugs, xenobiotics and endogenous compounds. Catalyzes the glucuronidation of endogenous estrogen hormones such as estradiol and estrone. Contributes to bile acid (BA) detoxification by catalyzing the glucuronidation of BA substrates, which are natural detergents for dietary lipids absorption. Involved in the glucuronidation of calcidiol, which is the major circulating form of vitamin D3, essential for the regulation of calcium and phosphate homeostasis. Involved in the glucuronidation of the phytochemical ferulic acid at the phenolic or the carboxylic acid group. Involved in the glucuronidation of the AGTR1 angiotensin receptor antagonists losartan, candesartan and zolarsartan, which can inhibit the effect of angiotensin II. This chain is UDP-glucuronosyltransferase 1A3, found in Rattus norvegicus (Rat).